We begin with the raw amino-acid sequence, 167 residues long: Transcription factor HES-5 (167 aa).

The region spanning 16 to 72 is the bHLH domain; sequence KNRLRKPVVEKMRRDRINSSIEQLKLLLEQEFARHQPNSKLEKADILEMAVSYLKHS. The 32-residue stretch at 88–119 folds into the Orange domain; that stretch reads YSEGYSWCLQEAVQFLTLHAASDTQMKLLYHF. Positions 124 to 138 are enriched in pro residues; the sequence is APAAPAKEPPAPGAA. The interval 124-167 is disordered; that stretch reads APAAPAKEPPAPGAAPQPARSSAKAAAAAVSTSRQPACGLWRPW. The segment covering 139-160 has biased composition (low complexity); that stretch reads PQPARSSAKAAAAAVSTSRQPA. Positions 164 to 167 match the WRPW motif motif; it reads WRPW.

In terms of assembly, transcription repression requires formation of a complex with a corepressor protein of the Groucho/TLE family.

Its subcellular location is the nucleus. In terms of biological role, transcriptional repressor of genes that require a bHLH protein for their transcription. Plays an important role as neurogenesis negative regulator. This is Transcription factor HES-5 (Hes5) from Mus musculus (Mouse).